The following is a 124-amino-acid chain: Small ribosomal subunit protein uS12 (124 aa).

At Asp-89 the chain carries 3-methylthioaspartic acid.

Belongs to the universal ribosomal protein uS12 family. In terms of assembly, part of the 30S ribosomal subunit. Contacts proteins S8 and S17. May interact with IF1 in the 30S initiation complex.

In terms of biological role, with S4 and S5 plays an important role in translational accuracy. Interacts with and stabilizes bases of the 16S rRNA that are involved in tRNA selection in the A site and with the mRNA backbone. Located at the interface of the 30S and 50S subunits, it traverses the body of the 30S subunit contacting proteins on the other side and probably holding the rRNA structure together. The combined cluster of proteins S8, S12 and S17 appears to hold together the shoulder and platform of the 30S subunit. This Psychrobacter sp. (strain PRwf-1) protein is Small ribosomal subunit protein uS12.